Here is a 113-residue protein sequence, read N- to C-terminus: MRHYEIIFMVHPDQSDKIPLLIEKYKKIINDNNGIIHRLEDWGRRQLSYSINKLQKAHYILMNIEVFPKTITLLETDFRFNNIILRNMIMSVKKAIVELSPILKLKDDKKEKK.

The protein belongs to the bacterial ribosomal protein bS6 family.

Functionally, binds together with bS18 to 16S ribosomal RNA. This is Small ribosomal subunit protein bS6 (rpsF) from Buchnera aphidicola subsp. Acyrthosiphon pisum (strain APS) (Acyrthosiphon pisum symbiotic bacterium).